The primary structure comprises 207 residues: Large ribosomal subunit protein uL4 (207 aa).

The tract at residues 48 to 75 (THSVKNRSAVRGGGRKPWRQKGTGRARQ) is disordered. A compositionally biased stretch (basic residues) spans 60 to 71 (GGRKPWRQKGTG).

This sequence belongs to the universal ribosomal protein uL4 family. Part of the 50S ribosomal subunit.

One of the primary rRNA binding proteins, this protein initially binds near the 5'-end of the 23S rRNA. It is important during the early stages of 50S assembly. It makes multiple contacts with different domains of the 23S rRNA in the assembled 50S subunit and ribosome. Functionally, forms part of the polypeptide exit tunnel. The sequence is that of Large ribosomal subunit protein uL4 from Staphylococcus carnosus (strain TM300).